Reading from the N-terminus, the 70-residue chain is Translation initiation factor IF-1 (70 aa).

Positions 1–70 (MKNDKLFLTG…LKLGRITQRK (70 aa)) constitute an S1-like domain.

It belongs to the IF-1 family. Component of the 30S ribosomal translation pre-initiation complex which assembles on the 30S ribosome in the order IF-2 and IF-3, IF-1 and N-formylmethionyl-tRNA(fMet); mRNA recruitment can occur at any time during PIC assembly.

The protein localises to the cytoplasm. One of the essential components for the initiation of protein synthesis. Stabilizes the binding of IF-2 and IF-3 on the 30S subunit to which N-formylmethionyl-tRNA(fMet) subsequently binds. Helps modulate mRNA selection, yielding the 30S pre-initiation complex (PIC). Upon addition of the 50S ribosomal subunit IF-1, IF-2 and IF-3 are released leaving the mature 70S translation initiation complex. This Mycoplasma genitalium (strain ATCC 33530 / DSM 19775 / NCTC 10195 / G37) (Mycoplasmoides genitalium) protein is Translation initiation factor IF-1.